Consider the following 193-residue polypeptide: Pre-histone-like nucleoprotein (193 aa).

S2 carries the N-acetylserine; by host modification. Residues 2-24 (SIFISPSNNTGWGLRAPSKMYGG) constitute a propeptide that is removed on maturation. K48 bears the N6-acetyllysine; by host mark. Position 55 is a phosphothreonine; by host (T55). The Nuclear localization signal motif lies at 183–193 (RVPVRTRPPRT).

Belongs to the adenoviridae histone-like nucleoprotein family. As to quaternary structure, interacts with the core-capsid bridging protein; this interaction bridges the virus core to the capsid. Interacts with host NPM1; this interaction might play a role in placing the pre-histone-like nucleoprotein on the viral DNA or regulating viral gene expression. Interacts with host HMGB1; this interaction inhibits host immune response. In terms of processing, cleaved near the N-terminus by the viral protease during virion maturation to form the mature protein.

The protein resides in the virion. Its subcellular location is the host nucleus. The protein localises to the host nucleolus. In terms of biological role, plays a role in the inhibition of host immune response within the nucleus. Interacts with cellular nucleosomes and immobilizes the host immune danger signal HMGB1 on chromatin. In turn, prevents HMGB1 release out of the cell and thus decreases inflammation. Also plays a role in the wrapping and condensation of the viral DNA. May also promote viral genome import into the nucleus. The polypeptide is Pre-histone-like nucleoprotein (Homo sapiens (Human)).